A 392-amino-acid polypeptide reads, in one-letter code: Selenide, water dikinase 1 (392 aa).

At S2 the chain carries N-acetylserine. C31 is a catalytic residue. Residues K32, G67–D69, D87, D110, and G161–T164 each bind ATP. D69 is a Mg(2+) binding site. Mg(2+) is bound at residue D110. Residue D265 coordinates Mg(2+).

It belongs to the selenophosphate synthase 1 family. Class II subfamily. Homodimer. Heterodimer with isoform 3. In terms of assembly, homodimer. Heterodimer with isoform 4. As to quaternary structure, homodimer. Heterodimer with isoform 1. Homodimer. Heterodimer with isoform 2. It depends on Mg(2+) as a cofactor. Gradually expressed during the cell cycle until G2/M phase and then decreases. As to expression, gradually expressed during the cell cycle until S phase and then decreases.

It localises to the cell membrane. The protein localises to the nucleus membrane. It is found in the cytoplasm. The enzyme catalyses hydrogenselenide + ATP + H2O = selenophosphate + AMP + phosphate + 2 H(+). With respect to regulation, activated by phosphate ions and by potassium ions. In terms of biological role, synthesizes selenophosphate from selenide and ATP. This chain is Selenide, water dikinase 1 (SEPHS1), found in Homo sapiens (Human).